A 445-amino-acid polypeptide reads, in one-letter code: FAS-associated factor 2-A (445 aa).

The region spanning 12–53 is the UBA domain; sequence EQTEKLLQFQDLTGIESMDQCRQTLQQHNWNIEAAVQDRLNE. A coiled-coil region spans residues 275–353; that stretch reads SERLEREERN…ERKSECLPAE (79 aa). The interval 302–354 is disordered; that stretch reads RADQEKERKKKEKQEQKRREEEEAQRKQMLEERKKRNLEEEKERKSECLPAEP. The segment covering 303-348 has biased composition (basic and acidic residues); it reads ADQEKERKKKEKQEQKRREEEEAQRKQMLEERKKRNLEEEKERKSE. The UBX domain maps to 357–439; that stretch reads DHPDNVKIIF…GLSQSQLLFV (83 aa).

It is found in the cytoplasm. Its subcellular location is the lipid droplet. The protein resides in the endoplasmic reticulum. Plays an important role in endoplasmic reticulum-associated degradation (ERAD) that mediates ubiquitin-dependent degradation of misfolded endoplasmic reticulum proteins. Involved in inhibition of lipid droplet degradation. Involved in stress granule disassembly. This is FAS-associated factor 2-A (faf2-a) from Xenopus laevis (African clawed frog).